The following is a 139-amino-acid chain: Small ribosomal subunit protein uS11 (139 aa).

The disordered stretch occupies residues 1–33; that stretch reads MPPAKKGPATSARKGQKTRRREKKNVPHGAAHI. A compositionally biased stretch (basic residues) spans 14–23; the sequence is KGQKTRRREK.

It belongs to the universal ribosomal protein uS11 family. As to quaternary structure, part of the 30S ribosomal subunit. Interacts with proteins S7 and S18. Binds to IF-3.

Its function is as follows. Located on the platform of the 30S subunit, it bridges several disparate RNA helices of the 16S rRNA. Forms part of the Shine-Dalgarno cleft in the 70S ribosome. This Mycobacterium bovis (strain ATCC BAA-935 / AF2122/97) protein is Small ribosomal subunit protein uS11.